We begin with the raw amino-acid sequence, 371 residues long: UDP-N-acetylglucosamine--N-acetylmuramyl-(pentapeptide) pyrophosphoryl-undecaprenol N-acetylglucosamine transferase (371 aa).

UDP-N-acetyl-alpha-D-glucosamine is bound by residues 15-17 (TGG), N126, R172, S199, I256, 275-280 (ALTVSE), and Q301.

Belongs to the glycosyltransferase 28 family. MurG subfamily.

It localises to the cell inner membrane. It catalyses the reaction di-trans,octa-cis-undecaprenyl diphospho-N-acetyl-alpha-D-muramoyl-L-alanyl-D-glutamyl-meso-2,6-diaminopimeloyl-D-alanyl-D-alanine + UDP-N-acetyl-alpha-D-glucosamine = di-trans,octa-cis-undecaprenyl diphospho-[N-acetyl-alpha-D-glucosaminyl-(1-&gt;4)]-N-acetyl-alpha-D-muramoyl-L-alanyl-D-glutamyl-meso-2,6-diaminopimeloyl-D-alanyl-D-alanine + UDP + H(+). It participates in cell wall biogenesis; peptidoglycan biosynthesis. Cell wall formation. Catalyzes the transfer of a GlcNAc subunit on undecaprenyl-pyrophosphoryl-MurNAc-pentapeptide (lipid intermediate I) to form undecaprenyl-pyrophosphoryl-MurNAc-(pentapeptide)GlcNAc (lipid intermediate II). The chain is UDP-N-acetylglucosamine--N-acetylmuramyl-(pentapeptide) pyrophosphoryl-undecaprenol N-acetylglucosamine transferase from Francisella tularensis subsp. mediasiatica (strain FSC147).